We begin with the raw amino-acid sequence, 212 residues long: Transcription antitermination protein NusB (212 aa).

Disordered regions lie at residues 1 to 34 (MSDEQSTPASGRPPRQSRGGLTSTGARKAASKSN) and 169 to 212 (EHDR…QAAG). A compositionally biased stretch (low complexity) spans 178 to 212 (APAQPAAKADTATDAVADAATDAAAADDAADQAAG).

Belongs to the NusB family.

Involved in transcription antitermination. Required for transcription of ribosomal RNA (rRNA) genes. Binds specifically to the boxA antiterminator sequence of the ribosomal RNA (rrn) operons. In Delftia acidovorans (strain DSM 14801 / SPH-1), this protein is Transcription antitermination protein NusB.